We begin with the raw amino-acid sequence, 570 residues long: Hydroxylamine reductase (570 aa).

Cys5, Cys8, Cys17, and Cys23 together coordinate [4Fe-4S] cluster. 8 residues coordinate hybrid [4Fe-2O-2S] cluster: His266, Glu290, Cys334, Cys425, Cys453, Cys478, Glu513, and Lys515. Position 425 is a cysteine persulfide (Cys425).

This sequence belongs to the HCP family. Requires [4Fe-4S] cluster as cofactor. The cofactor is hybrid [4Fe-2O-2S] cluster.

It localises to the cytoplasm. The catalysed reaction is A + NH4(+) + H2O = hydroxylamine + AH2 + H(+). Catalyzes the reduction of hydroxylamine to form NH(3) and H(2)O. In Clostridium botulinum (strain Loch Maree / Type A3), this protein is Hydroxylamine reductase.